The following is a 225-amino-acid chain: NAD(P)H-quinone oxidoreductase subunit K, chloroplastic (225 aa).

The [4Fe-4S] cluster site is built by Cys43, Cys44, Cys108, and Cys139.

The protein belongs to the complex I 20 kDa subunit family. As to quaternary structure, NDH is composed of at least 16 different subunits, 5 of which are encoded in the nucleus. It depends on [4Fe-4S] cluster as a cofactor.

The protein localises to the plastid. Its subcellular location is the chloroplast thylakoid membrane. It catalyses the reaction a plastoquinone + NADH + (n+1) H(+)(in) = a plastoquinol + NAD(+) + n H(+)(out). The catalysed reaction is a plastoquinone + NADPH + (n+1) H(+)(in) = a plastoquinol + NADP(+) + n H(+)(out). Its function is as follows. NDH shuttles electrons from NAD(P)H:plastoquinone, via FMN and iron-sulfur (Fe-S) centers, to quinones in the photosynthetic chain and possibly in a chloroplast respiratory chain. The immediate electron acceptor for the enzyme in this species is believed to be plastoquinone. Couples the redox reaction to proton translocation, and thus conserves the redox energy in a proton gradient. This is NAD(P)H-quinone oxidoreductase subunit K, chloroplastic from Platanus occidentalis (Sycamore).